Here is a 153-residue protein sequence, read N- to C-terminus: H/ACA ribonucleoprotein complex subunit 2 (153 aa).

Lys-3 participates in a covalent cross-link: Glycyl lysine isopeptide (Lys-Gly) (interchain with G-Cter in SUMO2). A Glycyl lysine isopeptide (Lys-Gly) (interchain with G-Cter in SUMO); alternate cross-link involves residue Lys-5. Lys-5 is covalently cross-linked (Glycyl lysine isopeptide (Lys-Gly) (interchain with G-Cter in SUMO1); alternate). Lys-5 participates in a covalent cross-link: Glycyl lysine isopeptide (Lys-Gly) (interchain with G-Cter in SUMO2); alternate.

This sequence belongs to the eukaryotic ribosomal protein eL8 family. As to quaternary structure, part of the H/ACA small nucleolar ribonucleoprotein (H/ACA snoRNP) complex, which contains NHP2/NOLA2, GAR1/NOLA1, NOP10/NOLA3, and DKC1/NOLA4, which is presumed to be the catalytic subunit. The complex contains a stable core formed by binding of one or two NOP10-DKC1 heterodimers to NHP2; GAR1 subsequently binds to this core via DKC1. The complex binds a box H/ACA small nucleolar RNA (snoRNA), which may target the specific site of modification within the RNA substrate. During assembly, the complex contains NAF1 instead of GAR1/NOLA1. The complex also interacts with TERC, which contains a 3'-terminal domain related to the box H/ACA snoRNAs. Specific interactions with snoRNAs or TERC are mediated by GAR1 and NHP2. Associates with NOLC1/NOPP140. H/ACA snoRNPs interact with the SMN complex, consisting of SMN1 or SMN2, GEMIN2/SIP1, DDX20/GEMIN3, and GEMIN4. This is mediated by interaction between GAR1 and SMN1 or SMN2. The SMN complex may be required for correct assembly of the H/ACA snoRNP complex. Component of the telomerase holoenzyme complex composed of one molecule of TERT, one molecule of WRAP53/TCAB1, two molecules of H/ACA ribonucleoprotein complex subunits DKC1, NOP10, NHP2 and GAR1, and a telomerase RNA template component (TERC). The telomerase holoenzyme complex is associated with TEP1, SMG6/EST1A and POT1.

Its subcellular location is the nucleus. It is found in the nucleolus. The protein resides in the cajal body. Functionally, required for ribosome biogenesis and telomere maintenance. Part of the H/ACA small nucleolar ribonucleoprotein (H/ACA snoRNP) complex, which catalyzes pseudouridylation of rRNA. This involves the isomerization of uridine such that the ribose is subsequently attached to C5, instead of the normal N1. Each rRNA can contain up to 100 pseudouridine ('psi') residues, which may serve to stabilize the conformation of rRNAs. May also be required for correct processing or intranuclear trafficking of TERC, the RNA component of the telomerase reverse transcriptase (TERT) holoenzyme. The polypeptide is H/ACA ribonucleoprotein complex subunit 2 (NHP2) (Bos taurus (Bovine)).